A 402-amino-acid polypeptide reads, in one-letter code: Choline dehydrogenase (402 aa).

This sequence belongs to the iron-containing alcohol dehydrogenase family.

The catalysed reaction is choline + NAD(+) = betaine aldehyde + NADH + H(+). It functions in the pathway amine and polyamine biosynthesis; betaine biosynthesis via choline pathway; betaine aldehyde from choline (dehydrogenase route): step 1/1. Functionally, involved in the biosynthesis of the osmoprotectant glycine betaine from choline. This is Choline dehydrogenase from Bacillus subtilis (strain 168).